Here is an 877-residue protein sequence, read N- to C-terminus: (E,E)-geranyllinalool synthase (877 aa).

Mg(2+) is bound by residues Asp-540 and Asp-544. Residues Asp-540, Asp-544, Arg-677, and Asn-680 each contribute to the substrate site. A DDXXD motif motif is present at residues Asp-540–Asp-544. Mg(2+) is bound by residues Asn-680, Ser-684, and Glu-688.

Belongs to the terpene synthase family. Tpsf subfamily. The cofactor is Mg(2+). It depends on Mn(2+) as a cofactor. In terms of tissue distribution, expressed in leaves and flowers.

It is found in the cytoplasm. It carries out the reaction (2E,6E,10E)-geranylgeranyl diphosphate + H2O = (6E,10E)-geranyllinalool + diphosphate. It participates in secondary metabolite biosynthesis; terpenoid biosynthesis. Its function is as follows. Involved in the biosynthesis of homoterpenes, attractants of herbivores parasitoids and predators (e.g. predatory mites and parasitoid wasps). Involved in diterpene (C20) biosynthesis. Catalyzes the conversion of geranylgeranyl diphosphate to (E,E)-geranyllinalool, the precursor of the insect-induced volatile C16-homoterpene TMTT. This is (E,E)-geranyllinalool synthase from Arabidopsis thaliana (Mouse-ear cress).